We begin with the raw amino-acid sequence, 234 residues long: Ribulose-phosphate 3-epimerase (234 aa).

Ser-7 lines the substrate pocket. The a divalent metal cation site is built by His-32, Asp-34, and His-65. Asp-34 (proton acceptor) is an active-site residue. Substrate contacts are provided by residues His-65, 139-142 (GFSG), 172-174 (DGG), and 194-195 (AS). Asp-172 is a binding site for a divalent metal cation. Asp-172 functions as the Proton donor in the catalytic mechanism.

Belongs to the ribulose-phosphate 3-epimerase family. Requires a divalent metal cation as cofactor.

It catalyses the reaction D-ribulose 5-phosphate = D-xylulose 5-phosphate. It functions in the pathway carbohydrate degradation. Functionally, catalyzes the reversible epimerization of D-ribulose 5-phosphate to D-xylulose 5-phosphate. The protein is Ribulose-phosphate 3-epimerase of Methanocaldococcus jannaschii (strain ATCC 43067 / DSM 2661 / JAL-1 / JCM 10045 / NBRC 100440) (Methanococcus jannaschii).